The primary structure comprises 661 residues: L-type lectin-domain containing receptor kinase V.5 (661 aa).

A signal peptide spans 1–25 (MSRELIILCQPILVLFLTLFYNSHG). Residues 26-282 (YFVSQGSVGI…KTSNRTKTVL (257 aa)) are Extracellular-facing. The tract at residues 30-250 (QGSVGIGFNG…GAIHYLMGWL (221 aa)) is legume-lectin like. 5 N-linked (GlcNAc...) asparagine glycosylation sites follow: asparagine 45, asparagine 64, asparagine 116, asparagine 198, and asparagine 276. A helical transmembrane segment spans residues 283 to 303 (AVCLTVSVFAAFVASWIGFVF). Residues 304-661 (YLRHKKVKEV…TDSSFVSHGR (358 aa)) lie on the Cytoplasmic side of the membrane. One can recognise a Protein kinase domain in the interval 338 to 596 (FKEKQLLGKG…LGVLCSHQAA (259 aa)). ATP-binding positions include 344–352 (LGKGGFGQV) and lysine 367. Residue aspartate 464 is the Proton acceptor of the active site.

In the C-terminal section; belongs to the protein kinase superfamily. Ser/Thr protein kinase family. It in the N-terminal section; belongs to the leguminous lectin family. Post-translationally, autophosphorylated on a Ser residue. As to expression, expressed at low levels in stems, leaves, flowers and siliques.

It is found in the cell membrane. It carries out the reaction L-seryl-[protein] + ATP = O-phospho-L-seryl-[protein] + ADP + H(+). The catalysed reaction is L-threonyl-[protein] + ATP = O-phospho-L-threonyl-[protein] + ADP + H(+). In terms of biological role, confers resistance to the pathogenic oomycetes Phytophthora infestans and Phytophthora capsici, but confers susceptibility to the pathogenic bacteria Pseudomonas syringae. This chain is L-type lectin-domain containing receptor kinase V.5, found in Arabidopsis thaliana (Mouse-ear cress).